Reading from the N-terminus, the 175-residue chain is Large ribosomal subunit protein uL10 (175 aa).

The protein belongs to the universal ribosomal protein uL10 family. In terms of assembly, part of the ribosomal stalk of the 50S ribosomal subunit. The N-terminus interacts with L11 and the large rRNA to form the base of the stalk. The C-terminus forms an elongated spine to which L12 dimers bind in a sequential fashion forming a multimeric L10(L12)X complex.

Its function is as follows. Forms part of the ribosomal stalk, playing a central role in the interaction of the ribosome with GTP-bound translation factors. The polypeptide is Large ribosomal subunit protein uL10 (Prochlorococcus marinus (strain SARG / CCMP1375 / SS120)).